The primary structure comprises 1806 residues: Non-reducing polyketide synthase pks12 (1806 aa).

A Starter acyltransferase (SAT) domain is found at 30–191 (TDTMSGMISL…TKLHLRGKVH (162 aa)). The Ketosynthase family 3 (KS3) domain maps to 330 to 755 (ENAIAIVGAG…GSNSALICGE (426 aa)). Catalysis depends on for beta-ketoacyl synthase activity residues C504, H639, and H678. The segment at 860 to 1156 (LAFSGQSKQT…HNPSQHTFLG (297 aa)) is malonyl-CoA:ACP transacylase (MAT) domain. The 286-residue stretch at 862–1147 (FSGQSKQTIG…IIPMVKRATH (286 aa)) folds into the Malonyl-CoA:ACP transacylase (MAT) domain. Catalysis depends on S947, which acts as the For acyl/malonyl transferase activity. The interval 1249-1383 (PQTPPLKLVT…GRFSVTSHID (135 aa)) is N-terminal hotdog fold. A PKS/mFAS DH domain is found at 1249–1558 (PQTPPLKLVT…FSRFPIAKLE (310 aa)). A product template (PT) domain region spans residues 1249-1558 (PQTPPLKLVT…FSRFPIAKLE (310 aa)). The Proton acceptor; for dehydratase activity role is filled by H1288. Residues 1404 to 1558 (SERLMAGRAY…FSRFPIAKLE (155 aa)) are C-terminal hotdog fold. The active-site Proton donor; for dehydratase activity is the D1468. The Carrier domain maps to 1727-1804 (QSKLRIRQRI…ELVDYVVISS (78 aa)). S1764 is subject to O-(pantetheine 4'-phosphoryl)serine.

Requires pantetheine 4'-phosphate as cofactor.

It functions in the pathway secondary metabolite biosynthesis. In terms of biological role, non-reducing polyketide synthase; part of the gene cluster that mediates the biosynthesis of mitorubrinol and mitorubrinic acid, two virulence factors that improve T.marneffei intracellular survival in macrophages. The two polyketide synthases pks12 and pks11 are probably responsible for sequential use in the biosynthesis of mitorubrinol and mitorubrinic acid. The first part of the biosynthesis is probably catalyzed by pks12, which synthesized orsellinic acid. This tetraketide is then used as a starter unit for pks11, which possesses a SAT domain, in the second part of the biosynthesis. Pks11, contains a methyltransferase domain, also served that methylates the products, using a methyl group from S-adenosylmethionine. This is Non-reducing polyketide synthase pks12 from Talaromyces marneffei (Penicillium marneffei).